A 389-amino-acid chain; its full sequence is WAT1-related protein At1g21890 (389 aa).

10 consecutive transmembrane segments (helical) span residues 13 to 33, 40 to 60, 73 to 93, 102 to 122, 142 to 162, 191 to 211, 225 to 245, 260 to 280, 287 to 307, and 312 to 332; these read LAMISMQFGYAGMYIITMVSL, YVLAVYRHAIATAVIAPFALF, IFLQIALLGFIEPVLDQNLYY, TFASATANVLPAITFVLAIIF, VITVSGALLMTLYKGPIVDFI, WIPGTLMLLGRTFGWAGFFIL, LTTLICLMGTLEGTAVSLVTV, FAAAYSGVICSGVAYYVQGVV, VFVATFNPLCVVITAALGVVV, and IHLGSVIGTLFIIVGLYTVVW. 2 EamA domains span residues 23-150 and 205-331; these read AGMY…GALL and WAGF…YTVV. The segment at 339–361 is disordered; that stretch reads RMTDDDEDCKGLPIKSPVKPVDT.

The protein belongs to the drug/metabolite transporter (DMT) superfamily. Plant drug/metabolite exporter (P-DME) (TC 2.A.7.4) family.

It localises to the membrane. This chain is WAT1-related protein At1g21890, found in Arabidopsis thaliana (Mouse-ear cress).